A 465-amino-acid polypeptide reads, in one-letter code: Cyclin-A1 (465 aa).

The protein belongs to the cyclin family. Cyclin AB subfamily. As to quaternary structure, interacts with the CDK2 and the CDC2 protein kinases to form a serine/threonine kinase holoenzyme complex. The cyclin subunit imparts substrate specificity to the complex. Does not bind CDK4 and CDK5 (in vitro). The cyclin A1-CDK2 complex interacts with transcription factor E2F-1 and RB proteins. Found in a complex with CDK2, CABLES1 and CCNE1. Interacts with INCA1. Interacts with KLHDC9. In terms of processing, polyubiquitinated via 'Lys-11'-linked ubiquitin by the anaphase-promoting complex (APC/C), leading to its degradation by the proteasome. Deubiquitinated and stabilized by USP37 enables entry into S phase. Ubiquitinated during the G1 phase by the SCF(FBXO31) complex, leading to its proteasomal degradation. As to expression, very high levels in testis and very low levels in brain. Also found in myeloid leukemia cell lines.

It is found in the nucleus. In terms of biological role, may be involved in the control of the cell cycle at the G1/S (start) and G2/M (mitosis) transitions. May primarily function in the control of the germline meiotic cell cycle and additionally in the control of mitotic cell cycle in some somatic cells. The sequence is that of Cyclin-A1 (CCNA1) from Homo sapiens (Human).